The primary structure comprises 195 residues: Cytochrome c oxidase assembly protein CtaG (195 aa).

At 1–7 (MSGGKPR) the chain is on the cytoplasmic side. A helical; Signal-anchor for type II membrane protein transmembrane segment spans residues 8–30 (SNTRTVAMLAGVVVLMGALSWAA). Topologically, residues 31-195 (VPFYSWFCKV…LDAKTEPTVN (165 aa)) are periplasmic.

It belongs to the COX11/CtaG family.

The protein localises to the cell inner membrane. Functionally, exerts its effect at some terminal stage of cytochrome c oxidase synthesis, probably by being involved in the insertion of the copper B into subunit I. This is Cytochrome c oxidase assembly protein CtaG from Paracoccus denitrificans (strain Pd 1222).